The primary structure comprises 473 residues: Ribulose bisphosphate carboxylase large chain (473 aa).

The substrate site is built by N116 and T166. Residue K168 is the Proton acceptor of the active site. K170 contributes to the substrate binding site. K194, D196, and E197 together coordinate Mg(2+). At K194 the chain carries N6-carboxylysine. H287 serves as the catalytic Proton acceptor. 3 residues coordinate substrate: R288, H320, and S372.

It belongs to the RuBisCO large chain family. Type I subfamily. In terms of assembly, heterohexadecamer of 8 large chains and 8 small chains. Mg(2+) serves as cofactor.

It catalyses the reaction 2 (2R)-3-phosphoglycerate + 2 H(+) = D-ribulose 1,5-bisphosphate + CO2 + H2O. The enzyme catalyses D-ribulose 1,5-bisphosphate + O2 = 2-phosphoglycolate + (2R)-3-phosphoglycerate + 2 H(+). Functionally, ruBisCO catalyzes two reactions: the carboxylation of D-ribulose 1,5-bisphosphate, the primary event in carbon dioxide fixation, as well as the oxidative fragmentation of the pentose substrate. Both reactions occur simultaneously and in competition at the same active site. In Thiomonas intermedia (strain K12) (Thiobacillus intermedius), this protein is Ribulose bisphosphate carboxylase large chain.